Here is a 270-residue protein sequence, read N- to C-terminus: 3-phenylpropionate-dihydrodiol/cinnamic acid-dihydrodiol dehydrogenase (270 aa).

Residue 10–34 (FITGGGSGLGLALVERFIEEGAQVA) participates in NAD(+) binding. Residue serine 143 coordinates substrate. Catalysis depends on tyrosine 156, which acts as the Proton acceptor.

This sequence belongs to the short-chain dehydrogenases/reductases (SDR) family.

It carries out the reaction 3-(cis-5,6-dihydroxycyclohexa-1,3-dien-1-yl)propanoate + NAD(+) = 3-(2,3-dihydroxyphenyl)propanoate + NADH + H(+). The catalysed reaction is (2E)-3-(cis-5,6-dihydroxycyclohexa-1,3-dien-1-yl)prop-2-enoate + NAD(+) = (2E)-3-(2,3-dihydroxyphenyl)prop-2-enoate + NADH + H(+). It participates in aromatic compound metabolism; 3-phenylpropanoate degradation. Functionally, converts 3-phenylpropionate-dihydrodiol (PP-dihydrodiol) and cinnamic acid-dihydrodiol (CI-dihydrodiol) into 3-(2,3-dihydroxylphenyl)propanoic acid (DHPP) and 2,3-dihydroxicinnamic acid (DHCI), respectively. The sequence is that of 3-phenylpropionate-dihydrodiol/cinnamic acid-dihydrodiol dehydrogenase from Shigella sonnei (strain Ss046).